A 120-amino-acid chain; its full sequence is Guanidine hydrolase-activating protein A (120 aa).

3 residues coordinate Ni(2+): histidine 2, glutamate 3, and glutamate 41. Cysteine 74, cysteine 77, cysteine 91, and cysteine 94 together coordinate Zn(2+).

Belongs to the HypA/HybF family.

Involved in the maturation of the nickel-dependent guanidine hydrolase GdmH. Required for nickel insertion into the metal center of GdmH. Seems to be required only for GdmH activation and not for activity. This is Guanidine hydrolase-activating protein A from Synechocystis sp. (strain ATCC 27184 / PCC 6803 / Kazusa).